The sequence spans 441 residues: Amino-acid acetyltransferase (441 aa).

Residues 295–434 form the N-acetyltransferase domain; sequence EQVRRATIND…QALYNYQRRS (140 aa).

Belongs to the acetyltransferase family. ArgA subfamily. As to quaternary structure, homohexamer.

Its subcellular location is the cytoplasm. It carries out the reaction L-glutamate + acetyl-CoA = N-acetyl-L-glutamate + CoA + H(+). It participates in amino-acid biosynthesis; L-arginine biosynthesis; N(2)-acetyl-L-ornithine from L-glutamate: step 1/4. This is Amino-acid acetyltransferase from Pectobacterium atrosepticum (strain SCRI 1043 / ATCC BAA-672) (Erwinia carotovora subsp. atroseptica).